A 23-amino-acid chain; its full sequence is GLIQTIKEKLKELAGGLVTGIQS.

This sequence belongs to the frog skin active peptide (FSAP) family. Aurein subfamily. As to expression, expressed by the skin dorsal glands.

It localises to the secreted. Has no antimicrobial or anticancer activity. The protein is Aurein-4.1 of Ranoidea aurea (Green and golden bell frog).